The following is a 425-amino-acid chain: Formyl-CoA:oxalate CoA-transferase (425 aa).

CoA is bound by residues 17–18 (QS), R38, 72–75 (LDTK), 96–98 (NFG), R104, and 136–139 (KVYE). D168 (nucleophile) is an active-site residue. 247-249 (GGQ) lines the substrate pocket.

It belongs to the CoA-transferase III family. Frc subfamily. As to quaternary structure, homodimer.

The enzyme catalyses formyl-CoA + oxalate = oxalyl-CoA + formate. It functions in the pathway metabolic intermediate degradation; oxalate degradation; CO(2) and formate from oxalate: step 1/2. Functionally, involved in the catabolism of oxalate and in the adapatation to low pH via the induction of the oxalate-dependent acid tolerance response (ATR). Catalyzes the transfer of the CoA moiety from formyl-CoA to oxalate. This Bradyrhizobium diazoefficiens (strain JCM 10833 / BCRC 13528 / IAM 13628 / NBRC 14792 / USDA 110) protein is Formyl-CoA:oxalate CoA-transferase.